A 425-amino-acid chain; its full sequence is Voltage-dependent calcium channel gamma-8 subunit (425 aa).

The next 4 membrane-spanning stretches (helical) occupy residues 19 to 39 (VQVL…TIAI), 129 to 149 (SIFP…VAAS), 158 to 178 (IILG…IGVI), and 208 to 228 (FGGL…NIYI). Residues Ser252 and Ser255 each carry the phosphoserine modification. Positions 272-304 (RRSRSSSRSSEPSPSRDASPGGPGGPGFASTDI) are disordered. Over residues 277–287 (SSRSSEPSPSR) the composition is skewed to low complexity. A helical transmembrane segment spans residues 318–338 (VAAGLAGAGGGGGGAVGAFGG). Gly residues predominate over residues 343 to 354 (AGGGGGGGGGAG). Disordered stretches follow at residues 343 to 365 (AGGG…ASGF) and 377 to 425 (GGGV…TTPV). Pro residues predominate over residues 387–401 (PPAPPAPAPPAPSAP). Polar residues predominate over residues 412-425 (ASNTNTLNRKTTPV).

The protein belongs to the PMP-22/EMP/MP20 family. CACNG subfamily. As to quaternary structure, interacts with CACNA1C. Identified in a complex with the L-type calcium channel subunits CACNA1C, CACNA2D1 and either CACNB1 or CACNB2. Acts as an auxiliary subunit for AMPA-selective glutamate receptors (AMPARs). Found in a complex with GRIA1, GRIA2, GRIA3, GRIA4, CNIH2, CNIH3, CACNG2, CACNG3, CACNG4, CACNG5 and CACNG7. Interacts with CNIH2. Found in a complex with GRIA1, GRIA2, GRIA3, GRIA4, DLG4 and CNIH2. Post-translationally, palmitoylated. Probably palmitoylated by ZDHHC3 and ZDHHC7. As to expression, detected in heart left ventricle.

The protein localises to the cell membrane. The protein resides in the postsynaptic density membrane. Regulates the activity of L-type calcium channels that contain CACNA1C as pore-forming subunit. Regulates the trafficking and gating properties of AMPA-selective glutamate receptors (AMPARs). Promotes their targeting to the cell membrane and synapses and modulates their gating properties by slowing their rates of activation, deactivation and desensitization and by mediating their resensitization. Does not show subunit-specific AMPA receptor regulation and regulates all AMPAR subunits. The protein is Voltage-dependent calcium channel gamma-8 subunit of Homo sapiens (Human).